Consider the following 103-residue polypeptide: UPF0145 protein PERMA_0324 (103 aa).

The protein belongs to the UPF0145 family.

In Persephonella marina (strain DSM 14350 / EX-H1), this protein is UPF0145 protein PERMA_0324.